A 149-amino-acid polypeptide reads, in one-letter code: Ribosome maturation factor RimP (149 aa).

Belongs to the RimP family.

The protein resides in the cytoplasm. Its function is as follows. Required for maturation of 30S ribosomal subunits. This is Ribosome maturation factor RimP from Sulfurimonas denitrificans (strain ATCC 33889 / DSM 1251) (Thiomicrospira denitrificans (strain ATCC 33889 / DSM 1251)).